We begin with the raw amino-acid sequence, 182 residues long: Ribosome maturation factor RimM (182 aa).

In terms of domain architecture, PRC barrel spans 102-182; it reads GEGDYYWKDL…TIEVDWDPGF (81 aa).

This sequence belongs to the RimM family. As to quaternary structure, binds ribosomal protein uS19.

It is found in the cytoplasm. An accessory protein needed during the final step in the assembly of 30S ribosomal subunit, possibly for assembly of the head region. Essential for efficient processing of 16S rRNA. May be needed both before and after RbfA during the maturation of 16S rRNA. It has affinity for free ribosomal 30S subunits but not for 70S ribosomes. This is Ribosome maturation factor RimM from Pectobacterium carotovorum subsp. carotovorum (strain PC1).